Reading from the N-terminus, the 205-residue chain is Molybdenum cofactor guanylyltransferase (205 aa).

Residues 14–16, Lys27, Asp77, and Asp107 each bind GTP; that span reads LAG. Asp107 contacts Mg(2+).

Belongs to the MobA family. Monomer. It depends on Mg(2+) as a cofactor.

It is found in the cytoplasm. It catalyses the reaction Mo-molybdopterin + GTP + H(+) = Mo-molybdopterin guanine dinucleotide + diphosphate. Its function is as follows. Transfers a GMP moiety from GTP to Mo-molybdopterin (Mo-MPT) cofactor (Moco or molybdenum cofactor) to form Mo-molybdopterin guanine dinucleotide (Mo-MGD) cofactor. This is Molybdenum cofactor guanylyltransferase from Burkholderia vietnamiensis (strain G4 / LMG 22486) (Burkholderia cepacia (strain R1808)).